A 223-amino-acid chain; its full sequence is uncharacterized protein (223 aa).

A compositionally biased stretch (basic residues) spans 1-11 (MLWVQRKRRRK). Residues 1-37 (MLWVQRKRRRKETSECPSDKDKSPESHKAKNESWIKS) are disordered. The segment covering 12–37 (ETSECPSDKDKSPESHKAKNESWIKS) has biased composition (basic and acidic residues). S43 is subject to Phosphoserine. Disordered stretches follow at residues 49-73 (LDNN…SSTV) and 196-223 (THTF…NRRH). Positions 51–61 (NNASASGNATQ) are enriched in polar residues. A compositionally biased stretch (low complexity) spans 62–73 (TESGSEEVSSTV). The span at 202–223 (HSHHSHHGHPSHQSHSLPNRRH) shows a compositional bias: basic residues.

This is an uncharacterized protein from Homo sapiens (Human).